The primary structure comprises 610 residues: Sensor protein kinase WalK (610 aa).

2 helical membrane-spanning segments follow: residues 14–34 and 184–204; these read LVIVYVLLIIIGMQIIGLYFT and IFIVGTGISLLITVILGFFIA. In terms of domain architecture, HAMP spans 205 to 257; the sequence is RTITKPITDMRNQTVEMSKGNYTQRVKIYGNDEIGELALAFNNLSKRVQEAQA. One can recognise a PAS domain in the interval 262-333; sequence EKRRLDSVIT…IQENNDSFLL (72 aa). Residues 326-379 enclose the PAC domain; it reads ENNDSFLLDINENEGIIARVNFSTIVQETGFVTGYIAVLHDVTEQQQVERERRE. Residues 383 to 601 enclose the Histidine kinase domain; that stretch reads NVSHELRTPL…SIFITLPCEV (219 aa). Residue His-386 is modified to Phosphohistidine; by autocatalysis.

Autophosphorylated.

It is found in the cell membrane. It catalyses the reaction ATP + protein L-histidine = ADP + protein N-phospho-L-histidine.. Member of the two-component regulatory system WalK/WalR. WalK functions as a sensor protein kinase which is autophosphorylated at a histidine residue and transfers its phosphate group to WalR. In Staphylococcus saprophyticus subsp. saprophyticus (strain ATCC 15305 / DSM 20229 / NCIMB 8711 / NCTC 7292 / S-41), this protein is Sensor protein kinase WalK (walK).